A 416-amino-acid chain; its full sequence is D-amino acid dehydrogenase (416 aa).

Position 3–17 (I3–Y17) interacts with FAD.

It belongs to the DadA oxidoreductase family. FAD serves as cofactor.

The catalysed reaction is a D-alpha-amino acid + A + H2O = a 2-oxocarboxylate + AH2 + NH4(+). It participates in amino-acid degradation; D-alanine degradation; NH(3) and pyruvate from D-alanine: step 1/1. Its function is as follows. Oxidative deamination of D-amino acids. The protein is D-amino acid dehydrogenase of Brucella abortus (strain S19).